A 444-amino-acid chain; its full sequence is uncharacterized protein (444 aa).

Residues 1–69 (MEKYMSLLTR…PKSGYYIVKK (69 aa)) enclose the HTH gntR-type domain. A DNA-binding region (H-T-H motif) is located at residues 29 to 48 (IRQLSARYQVSKSTVIRALQ). Lys-286 is modified (N6-(pyridoxal phosphate)lysine).

In the C-terminal section; belongs to the class-I pyridoxal-phosphate-dependent aminotransferase family. Pyridoxal 5'-phosphate is required as a cofactor.

This is an uncharacterized protein from Bacillus subtilis (strain 168).